The following is a 640-amino-acid chain: Threonine--tRNA ligase (640 aa).

A TGS domain is found at 1-60 (MKITFPDGAVKEFEPGVSTADIAASISPGLKKKALAGKLNGELLDLVTPIHEDGAIEIVT). The catalytic stretch occupies residues 241 to 538 (DHRKLGKELD…LIEEYKGAFP (298 aa)). Zn(2+) contacts are provided by Cys334, His385, and His515.

This sequence belongs to the class-II aminoacyl-tRNA synthetase family. As to quaternary structure, homodimer. It depends on Zn(2+) as a cofactor.

The protein resides in the cytoplasm. It carries out the reaction tRNA(Thr) + L-threonine + ATP = L-threonyl-tRNA(Thr) + AMP + diphosphate + H(+). Catalyzes the attachment of threonine to tRNA(Thr) in a two-step reaction: L-threonine is first activated by ATP to form Thr-AMP and then transferred to the acceptor end of tRNA(Thr). Also edits incorrectly charged L-seryl-tRNA(Thr). This is Threonine--tRNA ligase from Listeria monocytogenes serotype 4b (strain CLIP80459).